Consider the following 257-residue polypeptide: Triosephosphate isomerase, cytosolic (257 aa).

Positions 10 and 12 each coordinate substrate. His96 serves as the catalytic Electrophile. The active-site Proton acceptor is the Glu167.

Belongs to the triosephosphate isomerase family. As to quaternary structure, homodimer. In terms of tissue distribution, higher levels found in leaves than in roots.

It is found in the cytoplasm. It catalyses the reaction D-glyceraldehyde 3-phosphate = dihydroxyacetone phosphate. The protein operates within carbohydrate biosynthesis; gluconeogenesis. It participates in carbohydrate degradation; glycolysis; D-glyceraldehyde 3-phosphate from glycerone phosphate: step 1/1. The chain is Triosephosphate isomerase, cytosolic (TPI) from Stellaria longipes (Longstalk starwort).